Here is a 124-residue protein sequence, read N- to C-terminus: MLGSSTRSMFFLLVCIGLLADNRYNVSAMRHREFFLKETQAEKAGVQTEEISKLRSIGVQFKHTLEDQEMLNKNRRVLEEVNKDKIKAEETQERKNKTEDSFKSSKRRVRRGSDPIHNKAQPFS.

A signal peptide spans 1–20 (MLGSSTRSMFFLLVCIGLLA). N-linked (GlcNAc...) asparagine glycosylation is found at N25 and N96. A coiled-coil region spans residues 71 to 109 (LNKNRRVLEEVNKDKIKAEETQERKNKTEDSFKSSKRRV). Positions 87–103 (KAEETQERKNKTEDSFK) are enriched in basic and acidic residues. The tract at residues 87–124 (KAEETQERKNKTEDSFKSSKRRVRRGSDPIHNKAQPFS) is disordered.

It belongs to the CLV3/ESR signal peptide family. In terms of assembly, binds to SKM1 present in the pollen grain, particularly under relatively high temperature (at 30 degrees Celsius). Interacts with BAM3, especially in roots. As to expression, expressed at low levels in flowers, especially in pistils. Present in vascular tissues. In roots, confined to protophloem and sieve element precursor cells.

Its subcellular location is the secreted. The protein localises to the extracellular space. In terms of biological role, extracellular signal peptide that regulates cell fate. Represses root apical meristem maintenance. Represses protophloem differentiation in a BAM3-dependent manner. BRX, BAM3, and CLE45 act together to regulate the transition of protophloem cells from proliferation to differentiation, thus impinging on postembryonic growth capacity of the root meristem; this signaling pathway requires CRN and CLV2 and involves MAKR5 for its transduction/amplification. Triggers the accumulation of MAKR5 in developing sieve elements in a BAM3-dependent manner. Prevents, in a dose-dependent manner, auxin response in the root meristem thus leading in the repression of protophloem differentiation and periclinal sieve element precursor cell division. Promotes pollen tube growth prolongation in a SKM1 and SKM2-dependent manner, especially under relatively high temperature (at 30 degrees Celsius), thus conferring tolerance against high temperature probably through the maintenance of mitochondrial activity. Alleviates mitochondrial decay pollen tube in vitro culture. In Arabidopsis thaliana (Mouse-ear cress), this protein is CLAVATA3/ESR (CLE)-related protein 45.